A 257-amino-acid polypeptide reads, in one-letter code: Global transcriptional regulator CodY (257 aa).

Positions 1–155 (MSLLSKTREL…AATVIGMEIL (155 aa)) are GAF domain. 6 residues coordinate GTP: valine 22, phenylalanine 24, serine 43, arginine 44, arginine 45, and lysine 47. Positions 61, 96, and 98 each coordinate L-isoleucine. Residues glutamate 153 and lysine 158 each coordinate GTP. The H-T-H motif DNA-binding region spans 203–222 (ASKVADRVGITRSVIVNALR).

It belongs to the CodY family. As to quaternary structure, homodimer. Homotetramer. May form homodimers under conditions in which energy sources are sufficient (active state) and homotetramers under insufficient nutrient conditions (inactive state).

Its subcellular location is the cytoplasm. Activity of CodY is modulated by interaction with two types of effectors: the branched-chain amino acids (BCAAs) leucine, isoleucine and valine, which are signals of the nutritional status of the cell, and GTP, which may signal the energetic status of the cell. Its function is as follows. DNA-binding global transcriptional regulator which is involved in the adaptive response to starvation and acts by directly or indirectly controlling the expression of numerous genes in response to nutrient availability. During rapid exponential growth, CodY is highly active and represses genes whose products allow adaptation to nutrient depletion. In Staphylococcus aureus (strain Mu3 / ATCC 700698), this protein is Global transcriptional regulator CodY.